The primary structure comprises 232 residues: Endonuclease V (232 aa).

Mg(2+) contacts are provided by Asp43 and Asp109.

This sequence belongs to the endonuclease V family. Requires Mg(2+) as cofactor.

It is found in the cytoplasm. The enzyme catalyses Endonucleolytic cleavage at apurinic or apyrimidinic sites to products with a 5'-phosphate.. Functionally, DNA repair enzyme involved in the repair of deaminated bases. Selectively cleaves double-stranded DNA at the second phosphodiester bond 3' to a deoxyinosine leaving behind the intact lesion on the nicked DNA. This chain is Endonuclease V, found in Thermofilum pendens (strain DSM 2475 / Hrk 5).